Here is a 253-residue protein sequence, read N- to C-terminus: Major prion protein (253 aa).

The N-terminal stretch at 1 to 22 (MANLGCWMLVLFVATWSNLGLC) is a signal peptide. An interaction with ADGRG6 region spans residues 23 to 38 (KKRPKPGGWNTGGSRY). Positions 23-230 (KKRPKPGGWN…ESQAYYQRGS (208 aa)) are interaction with GRB2, ERI3 and SYN1. Positions 25–108 (RPKPGGWNTG…WNKPSKPKTN (84 aa)) are disordered. A run of 5 repeats spans residues 51-59 (PQGGGGWGQ), 60-67 (PHGGGWGQ), 68-75 (PHGGGWGQ), 76-83 (PHGGGWGQ), and 84-91 (PHGGGWGQ). The tract at residues 51-91 (PQGGGGWGQPHGGGWGQPHGGGWGQPHGGGWGQPHGGGWGQ) is 5 X 8 AA tandem repeats of P-H-G-G-G-W-G-Q. Over residues 52 to 95 (QGGGGWGQPHGGGWGQPHGGGWGQPHGGGWGQPHGGGWGQGGGT) the composition is skewed to gly residues. Cu(2+)-binding residues include His61, Gly62, Gly63, His69, Gly70, Gly71, His77, Gly78, Gly79, His85, Gly86, and Gly87. Residues Cys179 and Cys214 are joined by a disulfide bond. N-linked (GlcNAc...) asparagine glycans are attached at residues Asn181 and Asn197. The GPI-anchor amidated serine moiety is linked to residue Ser230. Positions 231 to 253 (SMVLFSSPPVILLISFLIFLIVG) are cleaved as a propeptide — removed in mature form.

The protein belongs to the prion family. In terms of assembly, monomer and homodimer. Has a tendency to aggregate into amyloid fibrils containing a cross-beta spine, formed by a steric zipper of superposed beta-strands. Soluble oligomers may represent an intermediate stage on the path to fibril formation. Copper binding may promote oligomerization. Interacts with GRB2, APP, ERI3/PRNPIP and SYN1. Mislocalized cytosolically exposed PrP interacts with MGRN1; this interaction alters MGRN1 subcellular location and causes lysosomal enlargement. Interacts with APP. Interacts with KIAA1191. Interacts with ADGRG6.

It is found in the cell membrane. The protein resides in the golgi apparatus. In terms of biological role, its primary physiological function is unclear. May play a role in neuronal development and synaptic plasticity. May be required for neuronal myelin sheath maintenance. May promote myelin homeostasis through acting as an agonist for ADGRG6 receptor. May play a role in iron uptake and iron homeostasis. Soluble oligomers are toxic to cultured neuroblastoma cells and induce apoptosis (in vitro). Association with GPC1 (via its heparan sulfate chains) targets PRNP to lipid rafts. Also provides Cu(2+) or Zn(2+) for the ascorbate-mediated GPC1 deaminase degradation of its heparan sulfate side chains. This Pongo pygmaeus (Bornean orangutan) protein is Major prion protein (PRNP).